A 502-amino-acid chain; its full sequence is Lysine--tRNA ligase (502 aa).

Mg(2+) is bound by residues glutamate 411 and glutamate 418.

This sequence belongs to the class-II aminoacyl-tRNA synthetase family. As to quaternary structure, homodimer. Requires Mg(2+) as cofactor.

It is found in the cytoplasm. It catalyses the reaction tRNA(Lys) + L-lysine + ATP = L-lysyl-tRNA(Lys) + AMP + diphosphate. The sequence is that of Lysine--tRNA ligase from Clostridium tetani (strain Massachusetts / E88).